The sequence spans 400 residues: Formate-dependent phosphoribosylglycinamide formyltransferase (400 aa).

Residues 22 to 23 (EL) and Glu-82 contribute to the N(1)-(5-phospho-beta-D-ribosyl)glycinamide site. ATP contacts are provided by residues Arg-115, Lys-156, 161 to 166 (SSGKGQ), 196 to 199 (EGFI), and Glu-204. Residues 120-309 (RLAAETLGLP…EFALHARAIL (190 aa)) enclose the ATP-grasp domain. Residues Glu-268 and Glu-280 each coordinate Mg(2+). Residues Asp-287, Lys-361, and 368 to 369 (RR) each bind N(1)-(5-phospho-beta-D-ribosyl)glycinamide.

The protein belongs to the PurK/PurT family. As to quaternary structure, homodimer.

The catalysed reaction is N(1)-(5-phospho-beta-D-ribosyl)glycinamide + formate + ATP = N(2)-formyl-N(1)-(5-phospho-beta-D-ribosyl)glycinamide + ADP + phosphate + H(+). Its pathway is purine metabolism; IMP biosynthesis via de novo pathway; N(2)-formyl-N(1)-(5-phospho-D-ribosyl)glycinamide from N(1)-(5-phospho-D-ribosyl)glycinamide (formate route): step 1/1. Involved in the de novo purine biosynthesis. Catalyzes the transfer of formate to 5-phospho-ribosyl-glycinamide (GAR), producing 5-phospho-ribosyl-N-formylglycinamide (FGAR). Formate is provided by PurU via hydrolysis of 10-formyl-tetrahydrofolate. The polypeptide is Formate-dependent phosphoribosylglycinamide formyltransferase (Xanthomonas oryzae pv. oryzae (strain PXO99A)).